Consider the following 330-residue polypeptide: 5'-AMP-activated protein kinase subunit gamma-1 (330 aa).

Positions 1 to 12 are enriched in low complexity; sequence MESVAAESAPAP. The interval 1-25 is disordered; the sequence is MESVAAESAPAPENEHSQETPESNS. CBS domains are found at residues 42 to 102, 124 to 186, and 197 to 259; these read PTSS…KSAL, SFKP…PKPE, and IGTY…NLDV. ADP is bound by residues Arg69, 84 to 89, Val129, 150 to 151, and Lys169; these read MLTITD and HR. Residues Arg69, 84–89, Val129, His150, 150–151, Lys169, Thr199, Ala204, 225–226, and 241–244 contribute to the AMP site; these read MLTITD, HR, SA, and SKFD. ATP contacts are provided by residues Arg69, 84-89, Val129, 150-151, Arg151, and Lys169; these read MLTITD and HR. The short motif at 137 to 158 is the AMPK pseudosubstrate element; the sequence is LFDAVSSLIRNKIHRLPVIDPE. 241–244 contributes to the ADP binding site; sequence SKFD. 241 to 244 is a binding site for ATP; sequence SKFD. Ser260 bears the Phosphoserine; by ULK1 mark. Thr262 bears the Phosphothreonine; by ULK1 mark. Residue Arg268 participates in ADP binding. Arg268 contributes to the AMP binding site. Residue Arg268 coordinates ATP. The residue at position 269 (Ser269) is a Phosphoserine; by ULK1. Positions 271–328 constitute a CBS 4 domain; that stretch reads YFEGVLKCYLHETLEAIINRLVEAEVHRLVVVDEHDVVKGIVSLSDILQALVLTGGEK. Residues Leu276 and 297 to 298 each bind ADP; that span reads HR. AMP-binding positions include Leu276, His297, 297 to 298, and 313 to 316; these read HR and SLSD. ATP-binding positions include Leu276 and 297 to 298; that span reads HR.

The protein belongs to the 5'-AMP-activated protein kinase gamma subunit family. In terms of assembly, AMPK is a heterotrimer of an alpha catalytic subunit (PRKAA1 or PRKAA2), a beta (PRKAB1 or PRKAB2) and a gamma non-catalytic subunits (PRKAG1, PRKAG2 or PRKAG3). Interacts with FNIP1 and FNIP2. Post-translationally, phosphorylated by ULK1 and ULK2; leading to negatively regulate AMPK activity and suggesting the existence of a regulatory feedback loop between ULK1, ULK2 and AMPK. There is some ambiguity for a phosphosite: Ser-260/Thr-262. In terms of processing, glycosylated; O-GlcNAcylated by OGT, promoting the AMP-activated protein kinase (AMPK) activity. Highly expressed in heart and brain, also found in kidney, white adipose tissue, lung and spleen.

Functionally, AMP/ATP-binding subunit of AMP-activated protein kinase (AMPK), an energy sensor protein kinase that plays a key role in regulating cellular energy metabolism. In response to reduction of intracellular ATP levels, AMPK activates energy-producing pathways and inhibits energy-consuming processes: inhibits protein, carbohydrate and lipid biosynthesis, as well as cell growth and proliferation. AMPK acts via direct phosphorylation of metabolic enzymes, and by longer-term effects via phosphorylation of transcription regulators. Also acts as a regulator of cellular polarity by remodeling the actin cytoskeleton; probably by indirectly activating myosin. Gamma non-catalytic subunit mediates binding to AMP, ADP and ATP, leading to activate or inhibit AMPK: AMP-binding results in allosteric activation of alpha catalytic subunit (PRKAA1 or PRKAA2) both by inducing phosphorylation and preventing dephosphorylation of catalytic subunits. ADP also stimulates phosphorylation, without stimulating already phosphorylated catalytic subunit. ATP promotes dephosphorylation of catalytic subunit, rendering the AMPK enzyme inactive. This is 5'-AMP-activated protein kinase subunit gamma-1 (Prkag1) from Rattus norvegicus (Rat).